Reading from the N-terminus, the 310-residue chain is Glutamyl-Q tRNA(Asp) synthetase (310 aa).

Residues 8-12 and glutamate 44 contribute to the L-glutamate site; that span reads RFAPS. The 'HIGH' region motif lies at 11 to 21; the sequence is PSPTGPLHLGS. The Zn(2+) site is built by cysteine 100, cysteine 102, tyrosine 123, and cysteine 127. The L-glutamate site is built by tyrosine 183 and arginine 201. The 'KMSKS' region signature appears at 239 to 243; sequence KLSKQ. Lysine 242 contacts ATP.

This sequence belongs to the class-I aminoacyl-tRNA synthetase family. GluQ subfamily. Requires Zn(2+) as cofactor.

Functionally, catalyzes the tRNA-independent activation of glutamate in presence of ATP and the subsequent transfer of glutamate onto a tRNA(Asp). Glutamate is transferred on the 2-amino-5-(4,5-dihydroxy-2-cyclopenten-1-yl) moiety of the queuosine in the wobble position of the QUC anticodon. The sequence is that of Glutamyl-Q tRNA(Asp) synthetase from Cupriavidus metallidurans (strain ATCC 43123 / DSM 2839 / NBRC 102507 / CH34) (Ralstonia metallidurans).